Here is a 577-residue protein sequence, read N- to C-terminus: Aspartate--tRNA ligase (577 aa).

An L-aspartate-binding site is contributed by E171. Residues 195–198 (QLFK) are aspartate. R217 lines the L-aspartate pocket. Residues 217–219 (RDE) and Q226 contribute to the ATP site. H437 contributes to the L-aspartate binding site. Position 472 (E472) interacts with ATP. Position 479 (R479) interacts with L-aspartate. Residue 524–527 (GFDR) participates in ATP binding.

It belongs to the class-II aminoacyl-tRNA synthetase family. Type 1 subfamily. In terms of assembly, homodimer.

The protein resides in the cytoplasm. The catalysed reaction is tRNA(Asp) + L-aspartate + ATP = L-aspartyl-tRNA(Asp) + AMP + diphosphate. In terms of biological role, catalyzes the attachment of L-aspartate to tRNA(Asp) in a two-step reaction: L-aspartate is first activated by ATP to form Asp-AMP and then transferred to the acceptor end of tRNA(Asp). The protein is Aspartate--tRNA ligase of Deinococcus deserti (strain DSM 17065 / CIP 109153 / LMG 22923 / VCD115).